The primary structure comprises 309 residues: tRNA pseudouridine synthase B (309 aa).

The active-site Nucleophile is the Asp40.

This sequence belongs to the pseudouridine synthase TruB family. Type 1 subfamily.

It catalyses the reaction uridine(55) in tRNA = pseudouridine(55) in tRNA. Its function is as follows. Responsible for synthesis of pseudouridine from uracil-55 in the psi GC loop of transfer RNAs. The polypeptide is tRNA pseudouridine synthase B (Mycobacterium avium (strain 104)).